Consider the following 356-residue polypeptide: Phospho-N-acetylmuramoyl-pentapeptide-transferase (356 aa).

Helical transmembrane passes span 27 to 47, 73 to 93, 97 to 117, 138 to 158, 165 to 185, 195 to 215, 232 to 252, 258 to 278, 284 to 304, and 333 to 353; these read ATLM…INML, TMGG…WMDL, FVWA…LDDL, FLVA…WLYV, AIPL…GAGN, GLAI…AYLA, AGEL…FLWF, AVFM…AIAV, IVLA…IIQV, and KVVI…LATL.

The protein belongs to the glycosyltransferase 4 family. MraY subfamily. Mg(2+) is required as a cofactor.

It localises to the cell inner membrane. The catalysed reaction is UDP-N-acetyl-alpha-D-muramoyl-L-alanyl-gamma-D-glutamyl-meso-2,6-diaminopimeloyl-D-alanyl-D-alanine + di-trans,octa-cis-undecaprenyl phosphate = di-trans,octa-cis-undecaprenyl diphospho-N-acetyl-alpha-D-muramoyl-L-alanyl-D-glutamyl-meso-2,6-diaminopimeloyl-D-alanyl-D-alanine + UMP. The protein operates within cell wall biogenesis; peptidoglycan biosynthesis. Functionally, catalyzes the initial step of the lipid cycle reactions in the biosynthesis of the cell wall peptidoglycan: transfers peptidoglycan precursor phospho-MurNAc-pentapeptide from UDP-MurNAc-pentapeptide onto the lipid carrier undecaprenyl phosphate, yielding undecaprenyl-pyrophosphoryl-MurNAc-pentapeptide, known as lipid I. The chain is Phospho-N-acetylmuramoyl-pentapeptide-transferase from Erythrobacter litoralis (strain HTCC2594).